The sequence spans 502 residues: Maturase K (502 aa).

It belongs to the intron maturase 2 family. MatK subfamily.

The protein localises to the plastid. Its subcellular location is the chloroplast. In terms of biological role, usually encoded in the trnK tRNA gene intron. Probably assists in splicing its own and other chloroplast group II introns. This chain is Maturase K, found in Vitis vinifera (Grape).